The following is a 117-amino-acid chain: Large ribosomal subunit protein bL19 (117 aa).

Belongs to the bacterial ribosomal protein bL19 family.

Its function is as follows. This protein is located at the 30S-50S ribosomal subunit interface and may play a role in the structure and function of the aminoacyl-tRNA binding site. The chain is Large ribosomal subunit protein bL19 from Shewanella halifaxensis (strain HAW-EB4).